Consider the following 290-residue polypeptide: 4-hydroxybenzoate octaprenyltransferase (290 aa).

Transmembrane regions (helical) follow at residues 21-41 (IGTLLLLWPTLWALFLSVKGM), 44-64 (LSILSIFVLGVIFMRAAGCVI), 84-104 (LATGAATPEEAKWLFVLLVFC), 106-126 (FILVLFLNTYAIVLSFIAVFL), 142-162 (LFLGMAFGWSIPMAYGASIEA), 212-232 (IISLLQIVTLFFLGLIGYLSQ), 235-255 (TSYFVVLFLATLLFVYQCKLI), and 267-287 (FLNNNYFGAMVFVAFLFGIFF).

Belongs to the UbiA prenyltransferase family. Mg(2+) is required as a cofactor.

The protein localises to the cell inner membrane. It carries out the reaction all-trans-octaprenyl diphosphate + 4-hydroxybenzoate = 4-hydroxy-3-(all-trans-octaprenyl)benzoate + diphosphate. Its pathway is cofactor biosynthesis; ubiquinone biosynthesis. In terms of biological role, catalyzes the prenylation of para-hydroxybenzoate (PHB) with an all-trans polyprenyl group. Mediates the second step in the final reaction sequence of ubiquinone-8 (UQ-8) biosynthesis, which is the condensation of the polyisoprenoid side chain with PHB, generating the first membrane-bound Q intermediate 3-octaprenyl-4-hydroxybenzoate. The chain is 4-hydroxybenzoate octaprenyltransferase from Pasteurella multocida (strain Pm70).